The chain runs to 559 residues: MSSEQSAPGASPRAPRPGTQKSSGAVTKKGERAAKEKPATVLPPVGEEEPKSPEEYQCSGVLETDFAELCTRWGYTDFPKVVNRPRPHPPFVPSASLSEKATLDDPRLSGSCSLNSLESKYVFFRPTIQVELEQEDSKSVKEIYIRGWKVEERILGVFSKCLPPLTQLQAINLWKVGLTDKTLTTFIELLPLCSSTLRKVSLEGNPLPEQSYHKLMALDSTIAHLSLRNNNIDDRGAQLLGQALSTLHSCNRTLVSLNLGFNHIGDEGAGYIADGLRLNRSLLWLSLAHNRIQDKGALKLAEVLRAFELTHTEVVERRRLLLEKGTQERSRSPSSSRHGDSKTDREKSQMVGISNSALVDKTDKTQTMKTPKGLGKKKEKSWELAKKEEKLGSGQSPTQGTPKKEDATKAGKGKVTIPEQKPSRAKGIKIGSREKRSILLESELVVEATEVVNPLLEPVEHRDGKVFMPGNKVLLHLNLIRNRITEVGLEGFLATVQYQMQFSKAKSASKGPVGLLWLSLAKNCFAPQCPAYAIIQELMLPRDPIKAKLREDEAMAFFP.

The span at 1 to 18 (MSSEQSAPGASPRAPRPG) shows a compositional bias: low complexity. The disordered stretch occupies residues 1–56 (MSSEQSAPGASPRAPRPGTQKSSGAVTKKGERAAKEKPATVLPPVGEEEPKSPEEY). Residues 28-38 (KKGERAAKEKP) are compositionally biased toward basic and acidic residues. LRR repeat units lie at residues 172–193 (NLWK…LPLC), 196–216 (TLRK…HKLM), 221–241 (TIAH…QLLG), 253–266 (TLVS…HIGD), and 281–302 (SLLW…KLAE). 2 stretches are compositionally biased toward basic and acidic residues: residues 324-348 (KGTQ…REKS) and 380-391 (KSWELAKKEEKL). A disordered region spans residues 324–427 (KGTQERSRSP…PEQKPSRAKG (104 aa)).

The sequence is that of Leucine-rich repeat-containing protein 71 (LRRC71) from Homo sapiens (Human).